The sequence spans 1391 residues: DNA-directed RNA polymerase subunit beta' (1391 aa).

The Zn(2+) site is built by Cys-72, Cys-74, Cys-87, and Cys-90. Mg(2+)-binding residues include Asp-462, Asp-464, and Asp-466. 4 residues coordinate Zn(2+): Cys-816, Cys-890, Cys-897, and Cys-900.

The protein belongs to the RNA polymerase beta' chain family. As to quaternary structure, the RNAP catalytic core consists of 2 alpha, 1 beta, 1 beta' and 1 omega subunit. When a sigma factor is associated with the core the holoenzyme is formed, which can initiate transcription. Mg(2+) is required as a cofactor. It depends on Zn(2+) as a cofactor.

It carries out the reaction RNA(n) + a ribonucleoside 5'-triphosphate = RNA(n+1) + diphosphate. In terms of biological role, DNA-dependent RNA polymerase catalyzes the transcription of DNA into RNA using the four ribonucleoside triphosphates as substrates. In Neisseria meningitidis serogroup C (strain 053442), this protein is DNA-directed RNA polymerase subunit beta'.